The sequence spans 242 residues: 1-(5-phosphoribosyl)-5-[(5-phosphoribosylamino)methylideneamino] imidazole-4-carboxamide isomerase (242 aa).

The active-site Proton acceptor is the Asp10. Residue Asp132 is the Proton donor of the active site.

The protein belongs to the HisA/HisF family.

The protein resides in the cytoplasm. It catalyses the reaction 1-(5-phospho-beta-D-ribosyl)-5-[(5-phospho-beta-D-ribosylamino)methylideneamino]imidazole-4-carboxamide = 5-[(5-phospho-1-deoxy-D-ribulos-1-ylimino)methylamino]-1-(5-phospho-beta-D-ribosyl)imidazole-4-carboxamide. It participates in amino-acid biosynthesis; L-histidine biosynthesis; L-histidine from 5-phospho-alpha-D-ribose 1-diphosphate: step 4/9. The protein is 1-(5-phosphoribosyl)-5-[(5-phosphoribosylamino)methylideneamino] imidazole-4-carboxamide isomerase of Methanopyrus kandleri (strain AV19 / DSM 6324 / JCM 9639 / NBRC 100938).